Reading from the N-terminus, the 43-residue chain is Protein PsbN (43 aa).

A helical membrane pass occupies residues 5–27 (TLVAISISCLLVSFTGYALYTAF).

Belongs to the PsbN family.

It localises to the plastid. Its subcellular location is the chloroplast thylakoid membrane. Its function is as follows. May play a role in photosystem I and II biogenesis. The chain is Protein PsbN from Cryptomeria japonica (Japanese cedar).